A 472-amino-acid chain; its full sequence is Glycosyl hydrolase family 109 protein (472 aa).

The segment at residues 1 to 35 is a signal peptide (tat-type signal); sequence MSQTPAVSRRLLLGSAAATGALATGIGSAAPVAAA. NAD(+)-binding positions include 68–69, Asp90, 139–142, His145, 159–160, and Asn188; these read NR, WEFH, and EL. Substrate is bound by residues Tyr217, Arg236, 248–251, and Tyr330; that span reads YPMH. Residue Tyr248 participates in NAD(+) binding.

It belongs to the Gfo/Idh/MocA family. Glycosyl hydrolase 109 subfamily. It depends on NAD(+) as a cofactor. Post-translationally, predicted to be exported by the Tat system. The position of the signal peptide cleavage has not been experimentally proven.

Glycosidase. Has no alpha-N-acetylgalactosaminidase activity. In Streptomyces coelicolor (strain ATCC BAA-471 / A3(2) / M145), this protein is Glycosyl hydrolase family 109 protein.